The following is a 262-amino-acid chain: ATP synthase subunit a (262 aa).

The next 6 membrane-spanning stretches (helical) occupy residues Ala-24–Phe-44, Val-84–Leu-104, Asp-129–Val-149, Pro-165–Ala-185, Leu-194–Ala-214, and Leu-228–Leu-248.

Belongs to the ATPase A chain family. F-type ATPases have 2 components, CF(1) - the catalytic core - and CF(0) - the membrane proton channel. CF(1) has five subunits: alpha(3), beta(3), gamma(1), delta(1), epsilon(1). CF(0) has three main subunits: a(1), b(2) and c(9-12). The alpha and beta chains form an alternating ring which encloses part of the gamma chain. CF(1) is attached to CF(0) by a central stalk formed by the gamma and epsilon chains, while a peripheral stalk is formed by the delta and b chains.

Its subcellular location is the cell inner membrane. Functionally, key component of the proton channel; it plays a direct role in the translocation of protons across the membrane. This chain is ATP synthase subunit a, found in Actinobacillus pleuropneumoniae serotype 7 (strain AP76).